A 968-amino-acid polypeptide reads, in one-letter code: Alanine--tRNA ligase, cytoplasmic (968 aa).

Residue Met-1 is modified to N-acetylmethionine. Phosphoserine occurs at positions 3 and 8. Position 19 is an N6-acetyllysine (Lys-19). Residues Arg-77, His-95, Trp-176, and 214–216 each bind ATP; that span reads IWN. Positions 216 and 239 each coordinate L-alanine. Residue Gly-243 participates in ATP binding. Residues Ser-399 and Ser-555 each carry the phosphoserine modification. Zn(2+) is bound by residues His-605, His-609, Cys-723, and His-727. A Nuclear localization signal motif is present at residues 750-763; that stretch reads RRIVAVTGAEAQKA. N6-acetyllysine is present on Lys-876. At Lys-943 the chain carries N6,N6,N6-trimethyllysine; alternate. Lys-943 is subject to N6,N6-dimethyllysine; alternate. Position 943 is an N6-methyllysine; alternate (Lys-943).

Belongs to the class-II aminoacyl-tRNA synthetase family. Monomer. Interacts with ANKRD16; the interaction is direct. Requires Zn(2+) as cofactor. Post-translationally, ISGylated. In terms of processing, methylation at 'Lys-943' by METTL21C.

The protein resides in the cytoplasm. It is found in the nucleus. The enzyme catalyses tRNA(Ala) + L-alanine + ATP = L-alanyl-tRNA(Ala) + AMP + diphosphate. It carries out the reaction (S)-lactate + ATP + H(+) = (S)-lactoyl-AMP + diphosphate. It catalyses the reaction (S)-lactoyl-AMP + L-lysyl-[protein] = N(6)-[(S)-lactoyl]-L-lysyl-[protein] + AMP + 2 H(+). Its activity is regulated as follows. The protein lactyltransferase activity is inhibited by beta-alanine. In terms of biological role, catalyzes the attachment of alanine to tRNA(Ala) in a two-step reaction: alanine is first activated by ATP to form Ala-AMP and then transferred to the acceptor end of tRNA(Ala). Also edits incorrectly charged tRNA(Ala) via its editing domain. In presence of high levels of lactate, also acts as a protein lactyltransferase that mediates lactylation of lysine residues in target proteins, such as TEAD1, TP53/p53 and YAP1. Protein lactylation takes place in a two-step reaction: lactate is first activated by ATP to form lactate-AMP and then transferred to lysine residues of target proteins. Acts as an inhibitor of TP53/p53 activity by catalyzing lactylation of TP53/p53. Acts as a positive regulator of the Hippo pathway by mediating lactylation of TEAD1 and YAP1. The chain is Alanine--tRNA ligase, cytoplasmic (AARS1) from Pongo abelii (Sumatran orangutan).